The primary structure comprises 243 residues: Sugar fermentation stimulation protein homolog (243 aa).

It belongs to the SfsA family.

The protein is Sugar fermentation stimulation protein homolog of Lacticaseibacillus casei (strain BL23) (Lactobacillus casei).